The chain runs to 102 residues: uncharacterized protein (102 aa).

The chain crosses the membrane as a helical span at residues 7–23; the sequence is IVFVSCVILGLAACSSQ.

It is found in the membrane. This is an uncharacterized protein from Haemophilus influenzae (strain ATCC 51907 / DSM 11121 / KW20 / Rd).